A 209-amino-acid chain; its full sequence is MTEYKIVIVGGGLVGKSALTLQLVQVCIKDQYYLIEFQNNQFQFENLQNHYIDEYDPTVEDSRREVSIDDQTCLLNILDTAGQQHSNAQSMDAHWSTVFVCLFNYFNITSMYDEIASFREQILRVKDGAKDLVPLILIINKADLDHESQGSGNEGQLAKDSLSFHQSSAKSRINLEEIPYSLVRELRKELKLDQSSGKAQKKKKQCLII.

10–17 is a GTP binding site; the sequence is GGGLVGKS. An Effector region motif is present at residues 55–63; sequence YDPTVEDSR. A Phosphothreonine modification is found at threonine 58. Residues 79-83 and 140-143 contribute to the GTP site; these read DTAGQ and NKAD. Position 206 is a cysteine methyl ester (cysteine 206). Cysteine 206 is lipidated: S-geranylgeranyl cysteine. A propeptide spans 207–209 (removed in mature form); that stretch reads LII.

The protein belongs to the small GTPase superfamily. Ras family. Phosphorylated in the presence of insulin.

The protein localises to the cell membrane. It catalyses the reaction GTP + H2O = GDP + phosphate + H(+). With respect to regulation, alternates between an inactive form bound to GDP and an active form bound to GTP. Activated by a guanine nucleotide-exchange factor (GEF) and inactivated by a GTPase-activating protein (GAP). Its function is as follows. This protein is activated by the insulin/insulin (insulin-like)-receptor system. This transition enables the ras protein to interact with the lectin-receptor/lectin complex, a process which ultimately lead to an initiation of an intra-cellular signal-transduction chain. The sequence is that of Ras-like protein from Geodia cydonium (Sponge).